The following is a 181-amino-acid chain: Alkyl hydroperoxide reductase AhpD (181 aa).

Cys-131 functions as the Proton donor in the catalytic mechanism. A disulfide bridge connects residues Cys-131 and Cys-134. The active-site Cysteine sulfenic acid (-SOH) intermediate is the Cys-134.

The protein belongs to the AhpD family.

It carries out the reaction N(6)-[(R)-dihydrolipoyl]-L-lysyl-[lipoyl-carrier protein] + a hydroperoxide = N(6)-[(R)-lipoyl]-L-lysyl-[lipoyl-carrier protein] + an alcohol + H2O. Antioxidant protein with alkyl hydroperoxidase activity. Required for the reduction of the AhpC active site cysteine residues and for the regeneration of the AhpC enzyme activity. The chain is Alkyl hydroperoxide reductase AhpD from Rhodopseudomonas palustris (strain BisB18).